The sequence spans 223 residues: UPF0319 protein VPA1584 (223 aa).

The signal sequence occupies residues 1–21; the sequence is MKLIKPLTCALALAMSGMAFA.

It belongs to the UPF0319 family.

The protein is UPF0319 protein VPA1584 of Vibrio parahaemolyticus serotype O3:K6 (strain RIMD 2210633).